The sequence spans 361 residues: Putative dual-specificity RNA methyltransferase RlmN (361 aa).

The active-site Proton acceptor is the glutamate 91. One can recognise a Radical SAM core domain in the interval 97–329; that stretch reads QHYGLSVCVT…KKKGVNCVVR (233 aa). 3 residues coordinate [4Fe-4S] cluster: cysteine 111, cysteine 115, and cysteine 118. S-adenosyl-L-methionine is bound by residues 163–164, serine 195, 218–220, and threonine 296; these read GE and SLH.

It belongs to the radical SAM superfamily. RlmN family. Requires [4Fe-4S] cluster as cofactor.

It is found in the cytoplasm. It carries out the reaction adenosine(2503) in 23S rRNA + 2 reduced [2Fe-2S]-[ferredoxin] + 2 S-adenosyl-L-methionine = 2-methyladenosine(2503) in 23S rRNA + 5'-deoxyadenosine + L-methionine + 2 oxidized [2Fe-2S]-[ferredoxin] + S-adenosyl-L-homocysteine. It catalyses the reaction adenosine(37) in tRNA + 2 reduced [2Fe-2S]-[ferredoxin] + 2 S-adenosyl-L-methionine = 2-methyladenosine(37) in tRNA + 5'-deoxyadenosine + L-methionine + 2 oxidized [2Fe-2S]-[ferredoxin] + S-adenosyl-L-homocysteine. Functionally, specifically methylates position 2 of adenine 2503 in 23S rRNA and position 2 of adenine 37 in tRNAs. This Streptococcus pneumoniae (strain CGSP14) protein is Putative dual-specificity RNA methyltransferase RlmN.